We begin with the raw amino-acid sequence, 383 residues long: Dephospho-CoA kinase (383 aa).

One can recognise a DPCK domain in the interval 3–201 (RIGLTGGMGA…RRLVPFERNL (199 aa)). Residue 11–16 (GAGKST) participates in ATP binding. The interval 196–383 (PFERNLRAAT…EVAERLLGTV (188 aa)) is UPF0157.

This sequence in the N-terminal section; belongs to the CoaE family. It in the C-terminal section; belongs to the UPF0157 (GrpB) family.

It is found in the cytoplasm. It catalyses the reaction 3'-dephospho-CoA + ATP = ADP + CoA + H(+). The protein operates within cofactor biosynthesis; coenzyme A biosynthesis; CoA from (R)-pantothenate: step 5/5. Its function is as follows. Catalyzes the phosphorylation of the 3'-hydroxyl group of dephosphocoenzyme A to form coenzyme A. In Nocardia farcinica (strain IFM 10152), this protein is Dephospho-CoA kinase.